We begin with the raw amino-acid sequence, 340 residues long: GTPase Obg (340 aa).

One can recognise an Obg domain in the interval M1–I158. An OBG-type G domain is found at S159–K325. GTP-binding positions include G165–S172, F190–E194, D211–G214, N278–D281, and S306–I308. Mg(2+) is bound by residues S172 and T192.

This sequence belongs to the TRAFAC class OBG-HflX-like GTPase superfamily. OBG GTPase family. Monomer. It depends on Mg(2+) as a cofactor.

The protein resides in the cytoplasm. In terms of biological role, an essential GTPase which binds GTP, GDP and possibly (p)ppGpp with moderate affinity, with high nucleotide exchange rates and a fairly low GTP hydrolysis rate. Plays a role in control of the cell cycle, stress response, ribosome biogenesis and in those bacteria that undergo differentiation, in morphogenesis control. The polypeptide is GTPase Obg (Ehrlichia ruminantium (strain Gardel)).